We begin with the raw amino-acid sequence, 124 residues long: MFQVIQKELDFGNAMIPKVWIQVIKLNPSSSIFVWGSNVSTCPAGDLALSMPGKSDVVTTKLTGAGSIDDLSTQMSRILSKKFQAQVYTSINLQGDFPNDPEVQSVFTQVIRAVIEIIESSKSS.

It localises to the cytoplasm. Its subcellular location is the nucleus. This is an uncharacterized protein from Schizosaccharomyces pombe (strain 972 / ATCC 24843) (Fission yeast).